The following is a 238-amino-acid chain: Probable transcriptional regulatory protein SSU98_0387 (238 aa).

It belongs to the TACO1 family. YeeN subfamily.

Its subcellular location is the cytoplasm. In Streptococcus suis (strain 98HAH33), this protein is Probable transcriptional regulatory protein SSU98_0387.